Consider the following 106-residue polypeptide: Large ribosomal subunit protein eL42 (106 aa).

Belongs to the eukaryotic ribosomal protein eL42 family.

The sequence is that of Large ribosomal subunit protein eL42 (RPL44) from Yarrowia lipolytica (strain CLIB 122 / E 150) (Yeast).